Here is a 317-residue protein sequence, read N- to C-terminus: Testis-specific Y-encoded protein 1 (317 aa).

2 disordered regions span residues 1 to 39 and 91 to 118; these read MSRPFASAPARGHRQGQEERERRSEEGGSVPGPRTFQVV and DEEQEQRPSQELEEKTVEEQGQERPGGP. Composition is skewed to basic and acidic residues over residues 15 to 26 and 95 to 112; these read QGQEERERRSEE and EQRPSQELEEKTVEEQGQ.

This sequence belongs to the nucleosome assembly protein (NAP) family. Phosphorylated. In terms of tissue distribution, testis. Probably in spermatogonia.

The protein localises to the cytoplasm. It localises to the nucleus. Its function is as follows. May be involved in sperm differentiation and proliferation. The sequence is that of Testis-specific Y-encoded protein 1 (TSPY1) from Bos taurus (Bovine).